Here is a 462-residue protein sequence, read N- to C-terminus: Glycoprotein endo-alpha-1,2-mannosidase (462 aa).

Over 1 to 9 (MAKFRRRTC) the chain is Cytoplasmic. Residues 10-30 (ILLSLFILFIFSLMMGLKMLW) traverse the membrane as a helical; Signal-anchor for type II membrane protein segment. At 31-462 (PNAASFGPPF…YALDQQQPAS (432 aa)) the chain is on the lumenal side. Residues 60–462 (DFQRSDRINM…YALDQQQPAS (403 aa)) are catalytic.

This sequence belongs to the glycosyl hydrolase 99 family. In terms of processing, undergoes proteolytic cleavage in the C-terminal region.

The protein resides in the golgi apparatus membrane. It carries out the reaction N-{alpha-Glc-(1-&gt;3)-alpha-Man-(1-&gt;2)-alpha-Man-(1-&gt;2)-alpha-Man-(1-&gt;3)-[alpha-Man-(1-&gt;2)-alpha-Man-(1-&gt;3)-[alpha-Man-(1-&gt;2)-alpha-Man-(1-&gt;6)]-alpha-Man-(1-&gt;6)]-beta-Man-(1-&gt;4)-beta-GlcNAc-(1-&gt;4)-beta-GlcNAc}-L-asparaginyl-[protein] + H2O = alpha-D-glucosyl-(1-&gt;3)-D-mannopyranose + N(4)-{alpha-D-Man-(1-&gt;2)-alpha-D-Man-(1-&gt;3)-[alpha-D-Man-(1-&gt;2)-alpha-D-Man-(1-&gt;3)-[alpha-D-Man-(1-&gt;2)-alpha-D-Man-(1-&gt;6)]-alpha-D-Man-(1-&gt;6)]-beta-D-Man-(1-&gt;4)-beta-D-GlaNAc-(1-&gt;4)-beta-D-GlcNAc}-L-asparaginyl-[protein] (N-glucan mannose isomer 8A1,2,3B1,2). The chain is Glycoprotein endo-alpha-1,2-mannosidase (Manea) from Mus musculus (Mouse).